A 1426-amino-acid polypeptide reads, in one-letter code: Protein RhsD (1426 aa).

The segment at 256–285 (AEEARTSSLSSSDSSRPLSASAFPDTLPGT) is disordered. A compositionally biased stretch (low complexity) spans 262–277 (SSLSSSDSSRPLSASA). Residues 320–1197 (YTEAGELLAV…LNEENPHHVY (878 aa)) are 28 X approximate tandem repeats. Tandem repeats lie at residues 334 to 356 (NTQVRAFTYDAQHPGRMVAHRYA), 357 to 378 (GRPEMRYRYDDTGRVVEQLNPA), 379 to 421 (GLSY…ELAD), 422 to 442 (GSVTRSGYDAAGRLTAQTDAA), 443 to 464 (GRRTEYGLNVVSGDITDITTPD), 465 to 485 (GRETKFYYNDGNQLTAVVSPD), 486 to 506 (GLESRREYDEPGRLVSETSRS), 507 to 529 (GETVRYRYDDAHSELPATTTDAT), 530 to 550 (GSTRQMTWSRYGQLLAFTDCS), 551 to 571 (GYQTRYEYDRFGQMTAVHREE), 572 to 592 (GISLYRRYDNRGRLTSVKDAQ), 593 to 613 (GRETRYEYNAAGDLTAVITPD), 614 to 633 (GNRSETQYDAWGKAVSTTQG), 634 to 654 (GLTRSMEYDAAGRVISLTNEN), 655 to 675 (GSHSVFSYDALDRLVQQGGFD), 676 to 695 (GRTQRYHYDLTGKLTQSEDE), 696 to 715 (GLVILWYYDESDRITHRTVN), 716 to 738 (GEPAEQWQYDGHGWLTDISHLSE), 739 to 762 (GHRVAVHYGYDDKGRLTGECQTVE), 812 to 832 (GGTPLVEYTRDRLHRETVRSF), 833 to 861 (GSMAGSNAAYELTSTYTPAGQLQSQHLNS), 862 to 882 (LVYDRDYGWSDNGDLVRISGP), 883 to 905 (RQTREYGYSATGRLESVRTLAPD), 906 to 941 (LDIRIPYATDPAGNRLPDPELHPDSTLTVWPDNRIA), 942 to 970 (EDAHYVYRHDEYGRLTEKTDRIPAGVIRT), 971 to 995 (DDERTHHYHYDSQHRLVFYTRIQHG), and 996 to 1030 (EPLVESRYLYDPLGRRMAKRVWRRERDLTGWMSLS). Positions 1073–1085 (ENGEREKAQRRSL) are enriched in basic and acidic residues. The tract at residues 1073 to 1097 (ENGEREKAQRRSLAETLQQEGSENG) is disordered. The stretch at 1173-1197 (GNTAWSAEYDEWGNQLNEENPHHVY) is repeat 28.

Belongs to the RHS family.

Its function is as follows. Rhs elements have a nonessential function. They may play an important role in the natural ecology of the cell. The protein is Protein RhsD (rhsD) of Escherichia coli (strain K12).